The sequence spans 223 residues: UPF0441 protein YgiB (223 aa).

Residues 178 to 195 are compositionally biased toward low complexity; sequence TVPKTAMAPKPATTTTVT. The disordered stretch occupies residues 178 to 223; that stretch reads TVPKTAMAPKPATTTTVTRGGFGESVAKQSTMQRSAAGTSTRSMGG. Polar residues predominate over residues 204-223; sequence AKQSTMQRSAAGTSTRSMGG.

Belongs to the UPF0441 family.

The polypeptide is UPF0441 protein YgiB (Salmonella enteritidis PT4 (strain P125109)).